Here is a 494-residue protein sequence, read N- to C-terminus: Cytochrome P450 monooxygenase ccsD (494 aa).

A helical transmembrane segment spans residues 5–25 (ISPRTLVLLAVTCSLLVLYFS). Cys438 is a binding site for heme. N-linked (GlcNAc...) asparagine glycosylation is found at Asn445 and Asn477.

Belongs to the cytochrome P450 family. Requires heme as cofactor.

The protein resides in the membrane. Its pathway is mycotoxin biosynthesis. Its function is as follows. Cytochrome P450 monooxygenase; part of the gene cluster that mediates the biosynthesis of a family of the mycotoxins cytochalasins E and K. The hybrid PKS-NRPS synthetase ccsA and the enoyl reductase ccsC are responsible for fusion of phenylalanine with an octaketide backbone and subsequent release of the stable tetramic acid precursor. The polyketide synthase module (PKS) of the PKS-NRPS ccsA is responsible for the synthesis of the octaketide backbone. The downstream nonribosomal peptide synthetase (NRPS) amidates the carboxyl end of the octaketide with a phenylalanine. A reductase-like domain (R) at the C-terminus catalyzes the reductive release of the polyketide-amino acid intermediate. Because ccsA lacks a designated enoylreductase (ER) domain, the required activity is provided the enoyl reductase ccsC. Upon formation of the 11-membered carbocycle-fused perhydroisoindolone intermediate, a number of oxidative steps are required to afford the final cytochalasin E and K, including two hydroxylations at C17 and C18, one alcohol oxidation at C17, one epoxidation at C6 and C7 and two Baeyer-Villiger oxidations. The oxidative modification at C17, C18 and the C6-C7 epoxidation are likely to be catalyzed by the two cytochrome P450 oxygenases ccsD and ccsG. CcsD may be responsible for the epoxidation of the C6-C7 double bond. CcsG may be responsible for the successive oxidative modifications at C17 and C18. The double Baeyer-Villiger oxidations of ketocytochalasin to precytochalasin and cytochalasin Z(16) are among the final steps leading to cytochalasin E and K and are catalyzed by ccsB. The first oxygen insertion step follows that of the classic BVMO mechanism, generating the ester precytochalasin. Release of precytochalasin into an aqueous environment can generate the shunt product iso-precytochalasin through spontaneous isomerization. Alternatively, precytochalasin can undergo further oxidation by ccsB to yield the in-line carbonate-containing cytochalasin Z(16). Cytochalasin Z(16) is a precursor to cytochalasin E and cytochalasin K, whereas iso-precytochalasin is a precursor to cytochalasin Z(17) and rosellichalasin. The hydrolyase ccsE may catalyze hydrolysis of epoxide bond in cytochalasin E to afford cytochalasin K. The function of ccsF has not been assigned but it may play a role in post-PKS-NRPS biosynthetic step, resistance or transport of cytochalasins and related PKS-NRPS products. This Aspergillus clavatus (strain ATCC 1007 / CBS 513.65 / DSM 816 / NCTC 3887 / NRRL 1 / QM 1276 / 107) protein is Cytochrome P450 monooxygenase ccsD.